A 286-amino-acid polypeptide reads, in one-letter code: Interferon-induced 35 kDa protein homolog (286 aa).

The tract at residues 5-26 (LQTVLYSLQEEQARLKMRLQEL) is leucine-zipper. NID domains follow at residues 81-170 (ALVT…GDVE) and 183-266 (FADE…GEVE).

The protein belongs to the NMI family. In terms of assembly, homodimer. Also interacts with B-ATF. Interacts with TRIM21. Interacts (via NID domains) with NMI (via NID domains); the interaction is direct and is facilitated by TRIM21. In terms of processing, phosphorylated. Dephosphorylation correlates with the formation of a complex with NMI.

It is found in the cytoplasm. The protein resides in the nucleus. The protein localises to the secreted. Its function is as follows. Acts as a signaling pathway regulator involved in innate immune system response. In response to interferon IFN-alpha, associates in a complex with transcriptional regulator NMI to regulate immune response; the complex formation prevents proteasome-mediated degradation of IFI35 and correlates with IFI35 dephosphorylation. In complex with NMI, inhibits virus-triggered type I interferon/IFN-beta production. In complex with NMI, negatively regulates nuclear factor NF-kappa-B signaling by inhibiting the nuclear translocation, activation and transcription of the NF-kappa-B subunit p65/RELA, resulting in the inhibition of endothelial cell proliferation, migration and re-endothelialization of injured arteries. Beside its role as an intracellular signaling pathway regulator, also functions extracellularly as damage-associated molecular patterns (DAMPs) to promote inflammation when actively released by macrophage to the extracellular space during cell injury and pathogen invasion. Macrophage-secreted IFI35 activates NF-kappa-B signaling in adjacent macrophages through Toll-like receptor 4/TLR4 activation, thereby inducing NF-kappa-B translocation from the cytoplasm into the nucleus which promotes the release of pro-inflammatory cytokines. The protein is Interferon-induced 35 kDa protein homolog of Mus musculus (Mouse).